A 178-amino-acid chain; its full sequence is Large ribosomal subunit protein uL16 (178 aa).

Belongs to the universal ribosomal protein uL16 family.

The polypeptide is Large ribosomal subunit protein uL16 (Saccharolobus solfataricus (strain ATCC 35092 / DSM 1617 / JCM 11322 / P2) (Sulfolobus solfataricus)).